The following is a 312-amino-acid chain: Erlin (312 aa).

The Cytoplasmic portion of the chain corresponds to 1–3 (MLT). A helical transmembrane segment spans residues 4–24 (ELALGLFALWIAIFSQALHKI). Topologically, residues 25–312 (EEGHVGVYYR…FVMGTTQQTV (288 aa)) are lumenal. Asparagine 104 carries an N-linked (GlcNAc...) asparagine glycan.

The protein belongs to the band 7/mec-2 family. In terms of assembly, seems to form a multimeric complex. In terms of tissue distribution, expressed in the germline only.

Its subcellular location is the endoplasmic reticulum membrane. The sequence is that of Erlin from Caenorhabditis elegans.